Consider the following 366-residue polypeptide: Capsular polysaccharide phosphotransferase LcbA (366 aa).

The protein belongs to the stealth family.

This Neisseria meningitidis protein is Capsular polysaccharide phosphotransferase LcbA (lcbA).